The chain runs to 558 residues: ATP-dependent RNA helicase ROK1 (558 aa).

The disordered stretch occupies residues 26–91; sequence PSAKQQQYEQ…EEAPPLEIQT (66 aa). Composition is skewed to basic and acidic residues over residues 34–53 and 64–81; these read EQHKEDTLQHQVDKEIDFFH and DSTDSKHTKEEKKEKKED. Positions 120 to 148 match the Q motif motif; the sequence is DMIGRFRLDSKLLSNLLEAEFVEPTAIQC. In terms of domain architecture, Helicase ATP-binding spans 151–329; the sequence is LPISLSGRDL…HSIMRDPIRV (179 aa). 164 to 171 is a binding site for ATP; it reads APTGSGKT. Residues 276-279 carry the DEAD box motif; sequence DEAD. Residues 340–504 form the Helicase C-terminal domain; it reads TIDQKLVFTG…GFSGWMENMT (165 aa). The segment at 509 to 558 is disordered; it reads NEKKKVKHKEIDRKDISTVPKLVKHKRKQREQMIEASKKRKQEETRNALQ. The segment covering 538–558 has biased composition (basic and acidic residues); it reads REQMIEASKKRKQEETRNALQ.

Belongs to the DEAD box helicase family. DDX52/ROK1 subfamily. As to quaternary structure, interacts with the U3 snoRNA and is associated with the 90S and 40S pre-ribosomes.

It is found in the nucleus. The protein resides in the nucleolus. The enzyme catalyses ATP + H2O = ADP + phosphate + H(+). Its function is as follows. ATP-dependent RNA helicase involved in 40S ribosomal subunit biogenesis. Required for the processing and cleavage of 35S pre-rRNA at sites A0, A1, and A2, leading to mature 18S rRNA. This chain is ATP-dependent RNA helicase ROK1 (ROK1), found in Scheffersomyces stipitis (strain ATCC 58785 / CBS 6054 / NBRC 10063 / NRRL Y-11545) (Yeast).